We begin with the raw amino-acid sequence, 343 residues long: Methionine import ATP-binding protein MetN (343 aa).

Positions 2 to 241 (ITLSHITKQF…PKTPLAQAFI (240 aa)) constitute an ABC transporter domain. 38-45 (GASGAGKS) is a binding site for ATP.

It belongs to the ABC transporter superfamily. Methionine importer (TC 3.A.1.24) family. In terms of assembly, the complex is composed of two ATP-binding proteins (MetN), two transmembrane proteins (MetI) and a solute-binding protein (MetQ).

The protein localises to the cell inner membrane. The catalysed reaction is L-methionine(out) + ATP + H2O = L-methionine(in) + ADP + phosphate + H(+). It carries out the reaction D-methionine(out) + ATP + H2O = D-methionine(in) + ADP + phosphate + H(+). In terms of biological role, part of the ABC transporter complex MetNIQ involved in methionine import. Responsible for energy coupling to the transport system. This Sodalis glossinidius (strain morsitans) protein is Methionine import ATP-binding protein MetN.